The chain runs to 291 residues: Serine/threonine-protein phosphatase Pgam5, mitochondrial (291 aa).

Residues 7–23 (FACGTGAGLAAFYLQRL) traverse the membrane as a helical segment. Residues 59–78 (KSLVRPQKNEQPQEQNRYNS) are disordered. Over residues 67–77 (NEQPQEQNRYN) the composition is skewed to polar residues.

This sequence belongs to the phosphoglycerate mutase family. BPG-dependent PGAM subfamily. Interacts with Pk92B/ASK1.

The protein resides in the mitochondrion outer membrane. The catalysed reaction is O-phospho-L-seryl-[protein] + H2O = L-seryl-[protein] + phosphate. It catalyses the reaction O-phospho-L-threonyl-[protein] + H2O = L-threonyl-[protein] + phosphate. Its function is as follows. Displays phosphatase activity for serine/threonine residues, and dephosphorylates and activates Pk92B kinase. Has apparently no phosphoglycerate mutase activity. The chain is Serine/threonine-protein phosphatase Pgam5, mitochondrial from Drosophila willistoni (Fruit fly).